Here is a 137-residue protein sequence, read N- to C-terminus: Keratin-associated protein 15-1 (137 aa).

Belongs to the PMG family. As to quaternary structure, interacts with hair keratins.

Functionally, in the hair cortex, hair keratin intermediate filaments are embedded in an interfilamentous matrix, consisting of hair keratin-associated proteins (KRTAP), which are essential for the formation of a rigid and resistant hair shaft through their extensive disulfide bond cross-linking with abundant cysteine residues of hair keratins. The matrix proteins include the high-sulfur and high-glycine-tyrosine keratins. In Homo sapiens (Human), this protein is Keratin-associated protein 15-1 (KRTAP15-1).